The chain runs to 132 residues: Small ribosomal subunit protein eS24 (132 aa).

The tract at residues 91-132 (LATHGLYEKKKTSRKQRTERQNRMKKVRSIKKASVGAAGKKN) is disordered. The segment covering 96-112 (LYEKKKTSRKQRTERQN) has biased composition (basic and acidic residues).

Belongs to the eukaryotic ribosomal protein eS24 family. As to quaternary structure, component of the small ribosomal subunit.

The protein resides in the cytoplasm. Component of the small ribosomal subunit. The ribosome is a large ribonucleoprotein complex responsible for the synthesis of proteins in the cell. Required for processing of pre-rRNA and maturation of 40S ribosomal subunits. The chain is Small ribosomal subunit protein eS24 (rps24) from Oryzias latipes (Japanese rice fish).